Here is a 213-residue protein sequence, read N- to C-terminus: Riboflavin/roseoflavin transporter RibM (213 aa).

Transmembrane regions (helical) follow at residues 15 to 35 (HIIW…ALGF), 38 to 58 (SLWT…AFYG), 107 to 129 (IAAA…SLSW), 136 to 158 (YIFV…FWFA), and 171 to 193 (FANG…LWGM).

This sequence belongs to the nicotinamide ribonucleoside (NR) uptake permease (TC 4.B.1) family.

The protein localises to the cell membrane. Functionally, transports riboflavin and roseoflavin. Can also transport FMN and FAD. May confer roseoflavin resistance to S.davawensis, which naturally produces this antibiotic during stationary growth phase. In Streptomyces davaonensis (strain DSM 101723 / JCM 4913 / KCC S-0913 / 768), this protein is Riboflavin/roseoflavin transporter RibM.